We begin with the raw amino-acid sequence, 32 residues long: Yop proteins translocation protein A (32 aa).

The polypeptide is Yop proteins translocation protein A (yscA) (Yersinia enterocolitica serotype O:8 / biotype 1B (strain NCTC 13174 / 8081)).